Here is a 269-residue protein sequence, read N- to C-terminus: MMVSPPQEDTVFNTDSDPVYEQATDDMTFNDTTTDGNGQESVPLEALTVVEIEKTSKGFGFNIVGGTDNPHFVGDIGIYVSSVNSESKSYGVVRTGDKILSFDGIDMTYKTHDEAVEVFRSVKIGHVAKMLIDREYLHLQEDRTQTPTASVSITPQVTPQTRSTQNNTDTPKSMSHSESKSRLTSHGLSAVIERIRGKVYEEEDAQSVTSYAPSTHSIIDDVPRTPRKPLSLLDPRNNSWLTEALYVSIGLGALTISGYLAYRFIRGRR.

The PDZ domain maps to 49 to 121; sequence VVEIEKTSKG…HDEAVEVFRS (73 aa). The disordered stretch occupies residues 143–185; sequence RTQTPTASVSITPQVTPQTRSTQNNTDTPKSMSHSESKSRLTS. Residues 145-174 show a composition bias toward polar residues; that stretch reads QTPTASVSITPQVTPQTRSTQNNTDTPKSM. A helical transmembrane segment spans residues 240–262; sequence WLTEALYVSIGLGALTISGYLAY.

It is found in the membrane. In terms of biological role, plays a role in the regulation of lifespan in a partially daf-16-mediated manner, and may be involved in regulating the levels of reactive oxygen species production in response to heat stress. The protein is Mitochondrial scaffolding protein 1 of Caenorhabditis elegans.